Consider the following 85-residue polypeptide: Follicular dendritic cell secreted peptide (85 aa).

The N-terminal stretch at 1–17 is a signal peptide; the sequence is MKKVLLLITAILAVAVG. The interval 75 to 83 is O-glycosylated at one site; it reads SAPTTPLPS.

O-glycosylated with core 1 or possibly core 8 glycans. In terms of tissue distribution, abundantly expressed in tonsil, lymph node, and trachea; strong expression in prostate; lower expression in thyroid, stomach, and colon.

The protein localises to the secreted. Its function is as follows. Can bind to the surface of B-lymphoma cells, but not T-lymphoma cells, consistent with a function as a secreted mediator acting upon B-cells. The sequence is that of Follicular dendritic cell secreted peptide (FDCSP) from Homo sapiens (Human).